A 110-amino-acid polypeptide reads, in one-letter code: Large ribosomal subunit protein uL22 (110 aa).

Belongs to the universal ribosomal protein uL22 family. Part of the 50S ribosomal subunit.

This protein binds specifically to 23S rRNA; its binding is stimulated by other ribosomal proteins, e.g. L4, L17, and L20. It is important during the early stages of 50S assembly. It makes multiple contacts with different domains of the 23S rRNA in the assembled 50S subunit and ribosome. Functionally, the globular domain of the protein is located near the polypeptide exit tunnel on the outside of the subunit, while an extended beta-hairpin is found that lines the wall of the exit tunnel in the center of the 70S ribosome. This is Large ribosomal subunit protein uL22 from Acidovorax ebreus (strain TPSY) (Diaphorobacter sp. (strain TPSY)).